Here is a 168-residue protein sequence, read N- to C-terminus: uncharacterized protein (168 aa).

Positions 1 to 21 (MKLLKALAVLSLATISSHSFA) form a signal peptide, or 19.

This is an uncharacterized protein from Haemophilus influenzae (strain ATCC 51907 / DSM 11121 / KW20 / Rd).